Consider the following 74-residue polypeptide: Ubiquitin-like protein FUBI (74 aa).

The protein belongs to the ubiquitin family.

This chain is Ubiquitin-like protein FUBI (FAU), found in Pongo abelii (Sumatran orangutan).